The chain runs to 355 residues: Probable butyrate kinase (355 aa).

It belongs to the acetokinase family.

The protein localises to the cytoplasm. The enzyme catalyses butanoate + ATP = butanoyl phosphate + ADP. This chain is Probable butyrate kinase, found in Clostridium botulinum (strain Eklund 17B / Type B).